A 248-amino-acid chain; its full sequence is 3-deoxy-manno-octulosonate cytidylyltransferase (248 aa).

The protein belongs to the KdsB family.

It localises to the cytoplasm. The catalysed reaction is 3-deoxy-alpha-D-manno-oct-2-ulosonate + CTP = CMP-3-deoxy-beta-D-manno-octulosonate + diphosphate. It functions in the pathway nucleotide-sugar biosynthesis; CMP-3-deoxy-D-manno-octulosonate biosynthesis; CMP-3-deoxy-D-manno-octulosonate from 3-deoxy-D-manno-octulosonate and CTP: step 1/1. It participates in bacterial outer membrane biogenesis; lipopolysaccharide biosynthesis. Activates KDO (a required 8-carbon sugar) for incorporation into bacterial lipopolysaccharide in Gram-negative bacteria. This chain is 3-deoxy-manno-octulosonate cytidylyltransferase, found in Christiangramia forsetii (strain DSM 17595 / CGMCC 1.15422 / KT0803) (Gramella forsetii).